A 251-amino-acid polypeptide reads, in one-letter code: tRNA (guanine-N(1)-)-methyltransferase (251 aa).

S-adenosyl-L-methionine contacts are provided by residues glycine 114 and 134 to 139 (IGDYVL).

The protein belongs to the RNA methyltransferase TrmD family. In terms of assembly, homodimer.

It is found in the cytoplasm. It carries out the reaction guanosine(37) in tRNA + S-adenosyl-L-methionine = N(1)-methylguanosine(37) in tRNA + S-adenosyl-L-homocysteine + H(+). In terms of biological role, specifically methylates guanosine-37 in various tRNAs. The chain is tRNA (guanine-N(1)-)-methyltransferase from Pelotomaculum thermopropionicum (strain DSM 13744 / JCM 10971 / SI).